A 343-amino-acid polypeptide reads, in one-letter code: tRNA N6-adenosine threonylcarbamoyltransferase (343 aa).

The Fe cation site is built by His115 and His119. Substrate-binding positions include 137–141 (IVSGG), Asp170, Gly183, Asp187, and Asn276. Residue Asp304 participates in Fe cation binding.

It belongs to the KAE1 / TsaD family. Fe(2+) is required as a cofactor.

It is found in the cytoplasm. The catalysed reaction is L-threonylcarbamoyladenylate + adenosine(37) in tRNA = N(6)-L-threonylcarbamoyladenosine(37) in tRNA + AMP + H(+). Required for the formation of a threonylcarbamoyl group on adenosine at position 37 (t(6)A37) in tRNAs that read codons beginning with adenine. Is involved in the transfer of the threonylcarbamoyl moiety of threonylcarbamoyl-AMP (TC-AMP) to the N6 group of A37, together with TsaE and TsaB. TsaD likely plays a direct catalytic role in this reaction. The chain is tRNA N6-adenosine threonylcarbamoyltransferase from Staphylococcus carnosus (strain TM300).